A 326-amino-acid chain; its full sequence is Large ribosomal subunit protein uL4 (326 aa).

The interval 1 to 211 is large ribosomal subunit protein uL4; the sequence is MASCVVKNWQ…EKLKARWGSG (211 aa). Disordered stretches follow at residues 44–76 and 211–326; these read ARQG…ARAG and GAAA…EDND. A compositionally biased stretch (basic residues) spans 60 to 71; sequence GGRKPWRQKGTG. The unknown stretch occupies residues 212-326; it reads AAAAAPTQAD…TAAAEEEDND (115 aa). Residues 221-238 are compositionally biased toward basic and acidic residues; the sequence is DRLEDQAQAAEREARPVE. 2 stretches are compositionally biased toward low complexity: residues 252–279 and 294–312; these read EAQA…QVQE and QGQA…PPAG. Acidic residues predominate over residues 313–326; sequence EEAETAAAEEEDND.

It belongs to the universal ribosomal protein uL4 family. In terms of assembly, part of the 50S ribosomal subunit.

In terms of biological role, one of the primary rRNA binding proteins, this protein initially binds near the 5'-end of the 23S rRNA. It is important during the early stages of 50S assembly. It makes multiple contacts with different domains of the 23S rRNA in the assembled 50S subunit and ribosome. Forms part of the polypeptide exit tunnel. The chain is Large ribosomal subunit protein uL4 from Synechococcus sp. (strain JA-3-3Ab) (Cyanobacteria bacterium Yellowstone A-Prime).